The primary structure comprises 494 residues: Aspartyl/glutamyl-tRNA(Asn/Gln) amidotransferase subunit B (494 aa).

The protein belongs to the GatB/GatE family. GatB subfamily. As to quaternary structure, heterotrimer of A, B and C subunits.

It catalyses the reaction L-glutamyl-tRNA(Gln) + L-glutamine + ATP + H2O = L-glutaminyl-tRNA(Gln) + L-glutamate + ADP + phosphate + H(+). The enzyme catalyses L-aspartyl-tRNA(Asn) + L-glutamine + ATP + H2O = L-asparaginyl-tRNA(Asn) + L-glutamate + ADP + phosphate + 2 H(+). Functionally, allows the formation of correctly charged Asn-tRNA(Asn) or Gln-tRNA(Gln) through the transamidation of misacylated Asp-tRNA(Asn) or Glu-tRNA(Gln) in organisms which lack either or both of asparaginyl-tRNA or glutaminyl-tRNA synthetases. The reaction takes place in the presence of glutamine and ATP through an activated phospho-Asp-tRNA(Asn) or phospho-Glu-tRNA(Gln). The chain is Aspartyl/glutamyl-tRNA(Asn/Gln) amidotransferase subunit B from Synechococcus sp. (strain CC9605).